We begin with the raw amino-acid sequence, 418 residues long: D-inositol 3-phosphate glycosyltransferase (418 aa).

His9 is a 1D-myo-inositol 3-phosphate binding site. Residues 15–16 (QP) and Gly23 each bind UDP-N-acetyl-alpha-D-glucosamine. Residues 20–25 (DSGGMN), Lys78, Tyr110, Thr134, and Arg154 each bind 1D-myo-inositol 3-phosphate. UDP-N-acetyl-alpha-D-glucosamine contacts are provided by Arg231, Lys236, and Arg294. The Mg(2+) site is built by Tyr303, Arg304, and Ala306. The UDP-N-acetyl-alpha-D-glucosamine site is built by Glu316 and Glu324. Residue Thr330 participates in Mg(2+) binding.

Belongs to the glycosyltransferase group 1 family. MshA subfamily. As to quaternary structure, homodimer.

The catalysed reaction is 1D-myo-inositol 3-phosphate + UDP-N-acetyl-alpha-D-glucosamine = 1D-myo-inositol 2-acetamido-2-deoxy-alpha-D-glucopyranoside 3-phosphate + UDP + H(+). In terms of biological role, catalyzes the transfer of a N-acetyl-glucosamine moiety to 1D-myo-inositol 3-phosphate to produce 1D-myo-inositol 2-acetamido-2-deoxy-glucopyranoside 3-phosphate in the mycothiol biosynthesis pathway. The chain is D-inositol 3-phosphate glycosyltransferase from Corynebacterium glutamicum (strain R).